A 695-amino-acid polypeptide reads, in one-letter code: Scarecrow-like protein 31 (695 aa).

Disordered stretches follow at residues 105 to 136 (VISD…NSSN) and 234 to 260 (ISKT…RSKQ). Residues 113-136 (SSIPNNSITTSSSSNSGDYSNSSN) show a composition bias toward low complexity. A coiled-coil region spans residues 233–266 (AISKTRKNHHEREEEEDDLEEARRRSKQFAVNEE). Positions 306-693 (AKKKSRAVDF…RILFSSSCWV (388 aa)) constitute a GRAS domain. Residues 313-377 (VDFRTLLTLC…EGSTGTMIQS (65 aa)) are leucine repeat I (LRI). The segment at 396-461 (YSVFLSASPF…PGLRKLRITG (66 aa)) is VHIID. The VHIID signature appears at 427-431 (LHIVD). The tract at residues 477 to 509 (DTGRRLTEYCKRFGVPFEYNAIASKNWETIKME) is leucine repeat II (LRII). The interval 519 to 614 (LAVNAVLRFK…GEFYGREVMN (96 aa)) is PFYRE. The SAW stretch occupies residues 617–693 (ACEGVDRVER…RILFSSSCWV (77 aa)).

Belongs to the GRAS family. As to expression, expressed in seedlings, roots, cotyledons, leaves and sepals.

Its subcellular location is the nucleus. Probable transcription factor involved in plant development. This chain is Scarecrow-like protein 31 (SCL31), found in Arabidopsis thaliana (Mouse-ear cress).